The following is a 615-amino-acid chain: MAKAVGIDLGTTNSVIAVLEGGKPVVLENAEGERVTPSVVAFRDGETLVGRMAKRQAVLNPEGTIFEIKRFIGRRFEEVQEEAKRVPYKVVPGPDGGVRVEVKGKLYTPEEISAMILRKLVEDASKKLGEKITKAVITVPAYFNNAQREATANAGRIAGLEVLRIINEPTAAALAYGLDKKGNETVLVFDLGGGTFDVTILEIGEGVFEVKATSGDTHLGGSDMDHAIVNWLAEEFKKEHGVDLKADRQALQRLIEAAEKAKIELSSTLETTISLPFIALDPASKTPLHLEKKLTRAKFEELIQPLLKRLRGPVEQALKDAGLTPAQIDEVILVGGATRVPAVQQVVRELLGKEPNRSVNPDEVVAMGAAIQAGVLMGEVRDVVLLDVTPLSLGVETKGGVMTVLIPRNTTIPTRKCEIFTTAEHNQTAVEIHVLQGERPMAQDNKSLGRFRLEGIPPMPAGVPQIEVCFDIDANGILHVTAKERSTGREASITIQNTTTLSEEEIQRIIEEAKRHAEEDRRRREHAELKNALDSARVQAERVLQERQGAPEARARLEAAIGKAKELVERDAPDPELKAATEELLKAVEEYEKGAQAASGKGPDDVIDADYKPAD.

A Phosphothreonine; by autocatalysis modification is found at threonine 195. The tract at residues 592–615 is disordered; the sequence is EKGAQAASGKGPDDVIDADYKPAD.

The protein belongs to the heat shock protein 70 family. In terms of assembly, forms a heterononamer with DnaJ and DafA in the resting state. Three copies of each protein are present in the complex.

Its function is as follows. Cooperates with DnaJ, GrpE and ClpB to reactivate heat-inactivated proteins. This Thermus thermophilus (strain ATCC 27634 / DSM 579 / HB8) protein is Chaperone protein DnaK (dnaK).